A 91-amino-acid polypeptide reads, in one-letter code: Small ribosomal subunit protein uS19m (91 aa).

Belongs to the universal ribosomal protein uS19 family. Component of the mitochondrial small ribosomal subunit (mt-SSU). Mature N.crassa 74S mitochondrial ribosomes consist of a small (37S) and a large (54S) subunit. The 37S small subunit contains a 16S ribosomal RNA (16S mt-rRNA) and 32 different proteins. The 54S large subunit contains a 23S rRNA (23S mt-rRNA) and 42 different proteins.

It is found in the mitochondrion. Its function is as follows. Component of the mitochondrial ribosome (mitoribosome), a dedicated translation machinery responsible for the synthesis of mitochondrial genome-encoded proteins, including at least some of the essential transmembrane subunits of the mitochondrial respiratory chain. The mitoribosomes are attached to the mitochondrial inner membrane and translation products are cotranslationally integrated into the membrane. The sequence is that of Small ribosomal subunit protein uS19m (rsm19) from Neurospora crassa (strain ATCC 24698 / 74-OR23-1A / CBS 708.71 / DSM 1257 / FGSC 987).